Reading from the N-terminus, the 251-residue chain is Prolactin-7B1 (251 aa).

Positions 1–29 (MNTSLTQLCFWALQILLMSNLLLWEDVVS) are cleaved as a signal peptide. 2 N-linked (GlcNAc...) asparagine glycosylation sites follow: Asn-2 and Asn-73. Cystine bridges form between Cys-100–Cys-216 and Cys-233–Cys-241.

This sequence belongs to the somatotropin/prolactin family. In terms of tissue distribution, expression restricted to placenta. Abundantly expressed in trophoblast cells of the junctional zone and trophoblasts migrating into the mesometrial decidua.

The protein resides in the secreted. The sequence is that of Prolactin-7B1 (Prl7b1) from Mus musculus (Mouse).